A 110-amino-acid polypeptide reads, in one-letter code: DNA-binding protein Mhun_3016 (110 aa).

This sequence belongs to the PDCD5 family.

The polypeptide is DNA-binding protein Mhun_3016 (Methanospirillum hungatei JF-1 (strain ATCC 27890 / DSM 864 / NBRC 100397 / JF-1)).